Consider the following 331-residue polypeptide: FMRFamide-related neuropeptides (331 aa).

An N-terminal signal peptide occupies residues 1 to 25 (MRCWSPCSLLVVIVIYCLSSHTSEA). Residues 26 to 65 (FDLAQACVESQRLSLLPICDTIFAVQQEGVQQSADDGMRS) constitute a propeptide that is removed on maturation. 2 positions are modified to phenylalanine amide: phenylalanine 71 and phenylalanine 83. A propeptide spanning residues 86 to 94 (NVPDLPFED) is cleaved from the precursor. Phenylalanine 100 is modified (phenylalanine amide). Residues 103 to 168 (AAPQLDELLK…YIDDVEDSDV (66 aa)) constitute a propeptide that is removed on maturation. The disordered stretch occupies residues 122-158 (QKADETSVRRKRSTDAAPQNNAENPEQKNDSAKITKR). Over residues 146–158 (PEQKNDSAKITKR) the composition is skewed to basic and acidic residues. Phenylalanine amide is present on residues phenylalanine 174 and phenylalanine 181. Positions 184 to 194 (NPSDVGNKLTE) are excised as a propeptide. Phenylalanine 200 carries the post-translational modification Phenylalanine amide. Residues 203 to 205 (DPE) constitute a propeptide that is removed on maturation. The residue at position 211 (phenylalanine 211) is a Phenylalanine amide. Residues 214–216 (SDD) constitute a propeptide that is removed on maturation. Phenylalanine 222 is modified (phenylalanine amide). Positions 225–236 (NPSDAEDELEED) are excised as a propeptide. Residue phenylalanine 242 is modified to Phenylalanine amide. Residues 245-254 (GGEDDEEEAE) constitute a propeptide that is removed on maturation. Phenylalanine amide is present on phenylalanine 260. Residues 263 to 265 (DPE) constitute a propeptide that is removed on maturation. A Phenylalanine amide modification is found at phenylalanine 271. Positions 274-277 (SGED) are excised as a propeptide. The span at 279-296 (RFMRFGRNPDEQEADKRF) shows a compositional bias: basic and acidic residues. The segment at 279–310 (RFMRFGRNPDEQEADKRFMRFGRGGEDDEVST) is disordered. Residue phenylalanine 283 is modified to Phenylalanine amide. A propeptide spanning residues 286–293 (NPDEQEAD) is cleaved from the precursor. A Phenylalanine amide modification is found at phenylalanine 299. A propeptide spanning residues 302 to 312 (GGEDDEVSTED) is cleaved from the precursor. The residue at position 318 (phenylalanine 318) is a Phenylalanine amide. The propeptide occupies 321 to 331 (SADKCKGCLEG).

Belongs to the FARP (FMRFamide related peptide) family.

Its subcellular location is the secreted. In terms of biological role, excitatory neurotransmitters that directly modulate chromatophore function by activating chromatophore expansion at the chromatophore neuromuscular junction. This is FMRFamide-related neuropeptides from Doryteuthis opalescens (California market squid).